A 505-amino-acid polypeptide reads, in one-letter code: Deoxyguanosinetriphosphate triphosphohydrolase (505 aa).

Positions 66–273 (RLTHSMEVQQ…MEAADDISYC (208 aa)) constitute an HD domain.

This sequence belongs to the dGTPase family. Type 1 subfamily. In terms of assembly, homotetramer. It depends on Mg(2+) as a cofactor.

The enzyme catalyses dGTP + H2O = 2'-deoxyguanosine + triphosphate + H(+). Functionally, dGTPase preferentially hydrolyzes dGTP over the other canonical NTPs. In Escherichia coli O17:K52:H18 (strain UMN026 / ExPEC), this protein is Deoxyguanosinetriphosphate triphosphohydrolase.